The chain runs to 262 residues: Homeobox protein Nkx-6.3 (262 aa).

The homeobox DNA-binding region spans Lys-140–Ser-199. Residues Lys-197–Asp-237 form a disordered region.

As to expression, expressed in the developing CNS and gastro-intestinal tract.

The protein localises to the nucleus. Putative transcription factor, which may be involved in patterning of central nervous system and pancreas. This Mus musculus (Mouse) protein is Homeobox protein Nkx-6.3 (Nkx6-3).